The primary structure comprises 329 residues: Phosphate acyltransferase (329 aa).

Belongs to the PlsX family. Homodimer. Probably interacts with PlsY.

It localises to the cytoplasm. The catalysed reaction is a fatty acyl-[ACP] + phosphate = an acyl phosphate + holo-[ACP]. Its pathway is lipid metabolism; phospholipid metabolism. Its function is as follows. Catalyzes the reversible formation of acyl-phosphate (acyl-PO(4)) from acyl-[acyl-carrier-protein] (acyl-ACP). This enzyme utilizes acyl-ACP as fatty acyl donor, but not acyl-CoA. In Campylobacter fetus subsp. fetus (strain 82-40), this protein is Phosphate acyltransferase.